Reading from the N-terminus, the 131-residue chain is Type-5 thionin (131 aa).

An N-terminal signal peptide occupies residues 1–29 (MGGGQKGLESAIVCLLVLGLVLEQVQVEG). A propeptide spans 67-131 (LASVRSSDEP…GDTLLASLDD (65 aa)) (acidic domain).

Belongs to the plant thionin (TC 1.C.44) family. Post-translationally, is disulfide-linked. As to expression, developing endosperm.

It localises to the secreted. In terms of biological role, thionins are small plant proteins which are toxic to animal cells. They seem to exert their toxic effect at the level of the cell membrane. Their precise function is not known. This chain is Type-5 thionin (TTHV), found in Triticum aestivum (Wheat).